The sequence spans 196 residues: Probable malonic semialdehyde reductase RutE (196 aa).

Belongs to the nitroreductase family. HadB/RutE subfamily. The cofactor is FMN.

It carries out the reaction 3-hydroxypropanoate + NADP(+) = 3-oxopropanoate + NADPH + H(+). Functionally, may reduce toxic product malonic semialdehyde to 3-hydroxypropionic acid, which is excreted. The polypeptide is Probable malonic semialdehyde reductase RutE (Escherichia coli (strain K12 / MC4100 / BW2952)).